The following is a 164-amino-acid chain: Vesiculogenesis and immune response regulator (164 aa).

In terms of processing, could be O-mannosylated. Is likely mannosylated on Thr-61 when overexpressed in M.smegmatis.

The protein resides in the cell inner membrane. Its subcellular location is the cytoplasm. In terms of biological role, virulence factor that regulates vesiculogenesis. Acts by regulating the production of mycobacterial membrane vesicles (MV) bearing Toll-like receptor 2 (TLR2) ligands, including the lipoproteins LpqH, a major host TLR2 agonist, and SodC. By restraining the release of most of the material that activates host cells through TLR2, VirR reduces the immunostimulant potential of M.tuberculosis and increases its virulence. May contribute to cell envelope integrity. When overexpressed in M.smegmatis, it modulates the production of IL-10, IL-12 p40 and TNF-alpha by RAW264.7 macrophages and it decreases the killing of M.smegmatis. The polypeptide is Vesiculogenesis and immune response regulator (Mycobacterium tuberculosis (strain ATCC 25618 / H37Rv)).